A 336-amino-acid chain; its full sequence is Glyceraldehyde-3-phosphate dehydrogenase (336 aa).

NAD(+)-binding positions include R12–I13, D34, R78, and S120. Residues S151 to T153 and T182 contribute to the D-glyceraldehyde 3-phosphate site. C152 acts as the Nucleophile in catalysis. N183 is a binding site for NAD(+). Residues N211–G212 and R234 each bind D-glyceraldehyde 3-phosphate. Position 316 (N316) interacts with NAD(+).

It belongs to the glyceraldehyde-3-phosphate dehydrogenase family. As to quaternary structure, homotetramer.

The protein resides in the cytoplasm. The catalysed reaction is D-glyceraldehyde 3-phosphate + phosphate + NAD(+) = (2R)-3-phospho-glyceroyl phosphate + NADH + H(+). Its pathway is carbohydrate degradation; glycolysis; pyruvate from D-glyceraldehyde 3-phosphate: step 1/5. Catalyzes the oxidative phosphorylation of glyceraldehyde 3-phosphate (G3P) to 1,3-bisphosphoglycerate (BPG) using the cofactor NAD. The first reaction step involves the formation of a hemiacetal intermediate between G3P and a cysteine residue, and this hemiacetal intermediate is then oxidized to a thioester, with concomitant reduction of NAD to NADH. The reduced NADH is then exchanged with the second NAD, and the thioester is attacked by a nucleophilic inorganic phosphate to produce BPG. The chain is Glyceraldehyde-3-phosphate dehydrogenase (gap) from Heyndrickxia coagulans (Weizmannia coagulans).